The sequence spans 399 residues: Acetate kinase (399 aa).

Asparagine 10 contributes to the Mg(2+) binding site. Lysine 17 is a binding site for ATP. Arginine 91 is a substrate binding site. Aspartate 148 acts as the Proton donor/acceptor in catalysis. Residues 208–212 (HLGNG), 283–285 (DCR), and 331–335 (GIGEN) each bind ATP. Glutamate 385 serves as a coordination point for Mg(2+).

It belongs to the acetokinase family. As to quaternary structure, homodimer. Mg(2+) is required as a cofactor. It depends on Mn(2+) as a cofactor.

Its subcellular location is the cytoplasm. It catalyses the reaction acetate + ATP = acetyl phosphate + ADP. Its pathway is metabolic intermediate biosynthesis; acetyl-CoA biosynthesis; acetyl-CoA from acetate: step 1/2. Functionally, catalyzes the formation of acetyl phosphate from acetate and ATP. Can also catalyze the reverse reaction. This chain is Acetate kinase, found in Shewanella oneidensis (strain ATCC 700550 / JCM 31522 / CIP 106686 / LMG 19005 / NCIMB 14063 / MR-1).